The sequence spans 330 residues: GMP reductase (330 aa).

The active-site Thioimidate intermediate is C180. 209–232 (LIADGGIRHNGDIAKSVRFGASMV) contacts NADP(+).

Belongs to the IMPDH/GMPR family. GuaC type 2 subfamily.

The enzyme catalyses IMP + NH4(+) + NADP(+) = GMP + NADPH + 2 H(+). Its function is as follows. Catalyzes the irreversible NADPH-dependent deamination of GMP to IMP. It functions in the conversion of nucleobase, nucleoside and nucleotide derivatives of G to A nucleotides, and in maintaining the intracellular balance of A and G nucleotides. The polypeptide is GMP reductase (Lactobacillus delbrueckii subsp. bulgaricus (strain ATCC 11842 / DSM 20081 / BCRC 10696 / JCM 1002 / NBRC 13953 / NCIMB 11778 / NCTC 12712 / WDCM 00102 / Lb 14)).